The sequence spans 128 residues: MKRREAREKALQALFQIELNEMSLDQAIKNIMEDEQDDYMEQLVEGVMANKAEIDAIIEPNLDNWRIDRLNKVDLSLLRLSVYEIKYLDDVPNRVSLNESIEIAKIYSDEKSSKFINGVLANIAPEDK.

This sequence belongs to the NusB family.

Functionally, involved in transcription antitermination. Required for transcription of ribosomal RNA (rRNA) genes. Binds specifically to the boxA antiterminator sequence of the ribosomal RNA (rrn) operons. The sequence is that of Transcription antitermination protein NusB from Listeria innocua serovar 6a (strain ATCC BAA-680 / CLIP 11262).